The sequence spans 221 residues: Cytidylate kinase (221 aa).

An ATP-binding site is contributed by 11–19; sequence GPCGAGKST.

Belongs to the cytidylate kinase family. Type 1 subfamily.

The protein localises to the cytoplasm. The catalysed reaction is CMP + ATP = CDP + ADP. It catalyses the reaction dCMP + ATP = dCDP + ADP. In Mycoplasmopsis agalactiae (strain NCTC 10123 / CIP 59.7 / PG2) (Mycoplasma agalactiae), this protein is Cytidylate kinase.